Consider the following 508-residue polypeptide: Monocarboxylate transporter 9 (508 aa).

Over 1-12 (MEFQKSPDGGWG) the chain is Cytoplasmic. Helical transmembrane passes span 13–33 (WVIV…PLAV), 53–73 (WVGS…SLFV), 80–100 (PVTI…SLAP), 102–122 (IYFL…LLYT), 137–157 (GLAL…YAAL), 164–184 (FYGL…ILAC), 303–323 (VFSA…PPSL), 341–361 (MPLI…LGIL), 370–390 (LYLY…IPFA), 396–416 (LAIL…FPYV), 431–451 (GILM…VGWF), and 460–480 (IAFY…LLAI). Residues 481–508 (LPCWDMCNKKLPKPAVPTTFFYKVASNV) are Cytoplasmic-facing.

The protein belongs to the major facilitator superfamily. Monocarboxylate porter (TC 2.A.1.13) family.

It localises to the cell membrane. The enzyme catalyses creatine(in) = creatine(out). The catalysed reaction is (R)-carnitine(in) = (R)-carnitine(out). Extracellular pH-and Na(+)-sensitive low-affinity creatine transporter. Also functions as a pH-independent carnitine efflux transporter. The polypeptide is Monocarboxylate transporter 9 (Slc16a9) (Mus musculus (Mouse)).